Consider the following 312-residue polypeptide: tRNA-cytidine(32) 2-sulfurtransferase (312 aa).

Residues 39–44 carry the PP-loop motif motif; that stretch reads SGGKDS. The [4Fe-4S] cluster site is built by C114, C117, and C205.

Belongs to the TtcA family. In terms of assembly, homodimer. The cofactor is Mg(2+). [4Fe-4S] cluster is required as a cofactor.

The protein localises to the cytoplasm. It carries out the reaction cytidine(32) in tRNA + S-sulfanyl-L-cysteinyl-[cysteine desulfurase] + AH2 + ATP = 2-thiocytidine(32) in tRNA + L-cysteinyl-[cysteine desulfurase] + A + AMP + diphosphate + H(+). It functions in the pathway tRNA modification. Its function is as follows. Catalyzes the ATP-dependent 2-thiolation of cytidine in position 32 of tRNA, to form 2-thiocytidine (s(2)C32). The sulfur atoms are provided by the cysteine/cysteine desulfurase (IscS) system. In Cupriavidus pinatubonensis (strain JMP 134 / LMG 1197) (Cupriavidus necator (strain JMP 134)), this protein is tRNA-cytidine(32) 2-sulfurtransferase.